A 1052-amino-acid polypeptide reads, in one-letter code: Malignant fibrous histiocytoma-amplified sequence 1 (1052 aa).

N-acetylalanine is present on alanine 2. LRR repeat units lie at residues aspartate 64–alanine 85, serine 88–leucine 109, histidine 112–alanine 133, glutamate 136–leucine 157, histidine 159–leucine 180, arginine 182–leucine 203, alanine 205–leucine 226, alanine 228–leucine 249, serine 251–leucine 272, arginine 274–alanine 296, glycine 297–leucine 318, arginine 320–leucine 341, and glycine 343–leucine 364. A required for interaction with PJA2 region spans residues aspartate 64–leucine 364. The segment at aspartate 64–arginine 649 is required for interaction with PPP2R2A. The region spanning glutamine 403 to arginine 649 is the Roc domain. Position 601 is an N6-acetyllysine (lysine 601).

In terms of assembly, interacts with RAF1. Interacts with HSPD1. Interacts with PPP2CA; retains PPP2CA into the cytoplasm and excludes it from the nucleus. Interacts with PPP2R2A; the interaction is direct. Interacts with PJA2. In terms of processing, ubiquitinated. Ubiquitination by PJA2 does not lead MFHAS1 to proteasomal degradation but positively regulates its function in polarization of macrophages. As to expression, ubiquitously expressed. Overexpressed in malignant fibrous histiocytomas. Expressed in red blood cells (at protein level).

The protein resides in the cytoplasm. Functionally, probable GTP-binding protein. Functions in innate immunity and more specifically the inflammatory response as a regulator of the Toll-like receptor TLR2 and TLR4 signaling pathways. Negatively regulates the part of the TLR4 signaling pathway that leads to the activation of the transcription factor AP-1. By retaining the phosphatase complex PP2A into the cytoplasm, prevents the dephosphorylation of the AP-1 subunit JUN which is required for proper activation of the transcription factor. Both inhibits and activates the TLR2-dependent signaling pathway. Positively regulates the TLR2 signaling pathway to activate specifically the downstream p38 and JNK MAP kinases and promote the polarization of macrophages toward the pro-inflammatory M1 phenotype. It may also play a role in the regulation of inflammation induced by high glucose through the PKB/AKT signaling pathway. Also involved in erythrocyte differentiation through activation of the ERK1/ERK2 signaling pathway. This is Malignant fibrous histiocytoma-amplified sequence 1 from Homo sapiens (Human).